The chain runs to 147 residues: D-aminoacyl-tRNA deacylase (147 aa).

The Gly-cisPro motif, important for rejection of L-amino acids signature appears at 136–137; the sequence is GP.

This sequence belongs to the DTD family. Homodimer.

The protein resides in the cytoplasm. It carries out the reaction glycyl-tRNA(Ala) + H2O = tRNA(Ala) + glycine + H(+). The enzyme catalyses a D-aminoacyl-tRNA + H2O = a tRNA + a D-alpha-amino acid + H(+). Functionally, an aminoacyl-tRNA editing enzyme that deacylates mischarged D-aminoacyl-tRNAs. Also deacylates mischarged glycyl-tRNA(Ala), protecting cells against glycine mischarging by AlaRS. Acts via tRNA-based rather than protein-based catalysis; rejects L-amino acids rather than detecting D-amino acids in the active site. By recycling D-aminoacyl-tRNA to D-amino acids and free tRNA molecules, this enzyme counteracts the toxicity associated with the formation of D-aminoacyl-tRNA entities in vivo and helps enforce protein L-homochirality. In Streptococcus pneumoniae serotype 4 (strain ATCC BAA-334 / TIGR4), this protein is D-aminoacyl-tRNA deacylase.